The sequence spans 247 residues: ATP synthase subunit a, chloroplastic (247 aa).

5 helical membrane-spanning segments follow: residues 38 to 58 (QVLI…IVTV), 95 to 115 (VPFI…GALL), 134 to 154 (INTT…AGLS), 199 to 219 (LVVV…VMFL), and 220 to 240 (GLFT…AYIG).

It belongs to the ATPase A chain family. F-type ATPases have 2 components, CF(1) - the catalytic core - and CF(0) - the membrane proton channel. CF(1) has five subunits: alpha(3), beta(3), gamma(1), delta(1), epsilon(1). CF(0) has four main subunits: a, b, b' and c.

Its subcellular location is the plastid. The protein resides in the chloroplast thylakoid membrane. Functionally, key component of the proton channel; it plays a direct role in the translocation of protons across the membrane. In Populus trichocarpa (Western balsam poplar), this protein is ATP synthase subunit a, chloroplastic.